The chain runs to 278 residues: Undecaprenyl-diphosphatase (278 aa).

8 helical membrane passes run 3-23 (YILI…IPIS), 42-62 (VAYS…IIYF), 88-108 (FLVI…LFVI), 112-132 (ILGL…IIIY), 152-172 (IIIV…RSGI), 190-210 (LSFI…VLFS), 225-245 (GLLI…NALL), and 253-273 (VVVL…LSGI).

The protein belongs to the UppP family.

It localises to the cell membrane. It carries out the reaction di-trans,octa-cis-undecaprenyl diphosphate + H2O = di-trans,octa-cis-undecaprenyl phosphate + phosphate + H(+). Its function is as follows. Catalyzes the dephosphorylation of undecaprenyl diphosphate (UPP). In Saccharolobus islandicus (strain M.16.4 / Kamchatka #3) (Sulfolobus islandicus), this protein is Undecaprenyl-diphosphatase.